The chain runs to 266 residues: Sesquipedalian-1 (266 aa).

A PH domain is found at 17-113; sequence PVDNAGFLYK…WVKALSRASF (97 aa). The tract at residues 165–184 is disordered; the sequence is QPSVAPQRPPPLPPRRRASA. Position 183 is a phosphoserine (Ser183). The F&amp;H motif lies at 191 to 203; sequence SFAQLHARYGLEV.

It belongs to the sesquipedalian family. In terms of assembly, forms homodimers and heterodimers with PHETA2. Interacts with OCRL and INPP5B. Interaction with OCRL may be important for endosomal morphology and function.

It localises to the early endosome. The protein localises to the recycling endosome. The protein resides in the golgi apparatus. Its subcellular location is the trans-Golgi network. It is found in the cytoplasmic vesicle. It localises to the clathrin-coated vesicle. Functionally, plays a role in endocytic trafficking. Required for receptor recycling from endosomes, both to the trans-Golgi network and the plasma membrane. This is Sesquipedalian-1 from Mus musculus (Mouse).